Reading from the N-terminus, the 397-residue chain is Subtilisin-like protease 3 (397 aa).

The first 19 residues, M1 to A19, serve as a signal peptide directing secretion. Residues R20–A116 constitute a propeptide that is removed on maturation. An Inhibitor I9 domain is found at S35–A116. The Peptidase S8 domain occupies T126–R397. Catalysis depends on charge relay system residues D158 and H189. A glycan (N-linked (GlcNAc...) asparagine) is linked at N250. Catalysis depends on S344, which acts as the Charge relay system. A glycan (N-linked (GlcNAc...) asparagine) is linked at N393.

It belongs to the peptidase S8 family.

The protein resides in the secreted. Its function is as follows. Secreted subtilisin-like serine protease with keratinolytic activity that contributes to pathogenicity. In Arthroderma benhamiae (strain ATCC MYA-4681 / CBS 112371) (Trichophyton mentagrophytes), this protein is Subtilisin-like protease 3 (SUB3).